Reading from the N-terminus, the 814-residue chain is Leucine-rich repeat-containing protein 41 (814 aa).

An interaction with Elongin BC complex region spans residues alanine 45 to valine 54. 3 positions are modified to phosphoserine: serine 155, serine 276, and serine 326. Residues leucine 265–cysteine 408 are disordered. Threonine 327 is modified (phosphothreonine). The span at threonine 354–proline 385 shows a compositional bias: low complexity. Serine 375 bears the Phosphoserine mark. Basic residues predominate over residues proline 389–arginine 403. 7 LRR repeats span residues tryptophan 489 to leucine 509, alanine 520 to leucine 532, phenylalanine 533 to isoleucine 557, serine 615 to valine 637, leucine 638 to cysteine 661, asparagine 703 to glutamate 730, and serine 733 to phenylalanine 754.

In terms of assembly, part of a E3 ubiquitin ligase complex with elongin BC complex (ELOB and ELOC), RBX1 and CUL5.

This is Leucine-rich repeat-containing protein 41 (LRRC41) from Bos taurus (Bovine).